A 278-amino-acid chain; its full sequence is tRNA pseudouridine synthase A (278 aa).

The Nucleophile role is filled by aspartate 52. Tyrosine 110 serves as a coordination point for substrate. A disordered region spans residues 259–278; that stretch reads SKRQNGTTKVEQPSSYVHEE. Polar residues predominate over residues 261–278; sequence RQNGTTKVEQPSSYVHEE.

Belongs to the tRNA pseudouridine synthase TruA family. Homodimer.

The enzyme catalyses uridine(38/39/40) in tRNA = pseudouridine(38/39/40) in tRNA. In terms of biological role, formation of pseudouridine at positions 38, 39 and 40 in the anticodon stem and loop of transfer RNAs. The chain is tRNA pseudouridine synthase A from Chloroflexus aurantiacus (strain ATCC 29366 / DSM 635 / J-10-fl).